The primary structure comprises 450 residues: Deoxyguanosinetriphosphate triphosphohydrolase-like protein (450 aa).

The HD domain occupies 61–201; sequence RLTHSLEVAQ…AKLAPELNAD (141 aa).

The protein belongs to the dGTPase family. Type 2 subfamily.

This Pasteurella multocida (strain Pm70) protein is Deoxyguanosinetriphosphate triphosphohydrolase-like protein.